Reading from the N-terminus, the 533-residue chain is Retinoid isomerohydrolase (533 aa).

Cysteine 112 carries S-palmitoyl cysteine; in membrane form lipidation. At serine 117 the chain carries Phosphoserine. Residue histidine 180 coordinates Fe cation. A lipid anchor (S-palmitoyl cysteine; in membrane form) is attached at cysteine 231. Positions 241 and 313 each coordinate Fe cation. A lipid anchor (S-palmitoyl cysteine; in membrane form) is attached at cysteine 329. Histidine 527 serves as a coordination point for Fe cation.

The protein belongs to the carotenoid oxygenase family. Fe(2+) is required as a cofactor. Palmitoylation by LRAT regulates ligand binding specificity; the palmitoylated form (membrane form) specifically binds all-trans-retinyl-palmitate, while the soluble unpalmitoylated form binds all-trans-retinol (vitamin A). In terms of tissue distribution, retinal pigment epithelium specific.

It is found in the cytoplasm. The protein resides in the cell membrane. It localises to the microsome membrane. The enzyme catalyses an all-trans-retinyl ester + H2O = 11-cis-retinol + a fatty acid + H(+). It catalyses the reaction lutein = (3R,3'S)-zeaxanthin. It carries out the reaction all-trans-retinyl hexadecanoate + H2O = 11-cis-retinol + hexadecanoate + H(+). Functionally, critical isomerohydrolase in the retinoid cycle involved in regeneration of 11-cis-retinal, the chromophore of rod and cone opsins. Catalyzes the cleavage and isomerization of all-trans-retinyl fatty acid esters to 11-cis-retinol which is further oxidized by 11-cis retinol dehydrogenase to 11-cis-retinal for use as visual chromophore. Essential for the production of 11-cis retinal for both rod and cone photoreceptors. Also capable of catalyzing the isomerization of lutein to meso-zeaxanthin an eye-specific carotenoid. The soluble form binds vitamin A (all-trans-retinol), making it available for LRAT processing to all-trans-retinyl ester. The membrane form, palmitoylated by LRAT, binds all-trans-retinyl esters, making them available for IMH (isomerohydrolase) processing to all-cis-retinol. The soluble form is regenerated by transferring its palmitoyl groups onto 11-cis-retinol, a reaction catalyzed by LRAT. The sequence is that of Retinoid isomerohydrolase (RPE65) from Gallus gallus (Chicken).